Consider the following 388-residue polypeptide: S-adenosylmethionine synthase (388 aa).

Histidine 17 provides a ligand contact to ATP. Position 19 (aspartate 19) interacts with Mg(2+). Glutamate 45 is a K(+) binding site. L-methionine-binding residues include glutamate 58 and glutamine 106. Residues 106–116 (QSAHISQGVDR) form a flexible loop region. Residues 166–168 (DAK), aspartate 241, 247–248 (RK), alanine 264, and lysine 268 each bind ATP. Aspartate 241 provides a ligand contact to L-methionine. L-methionine is bound at residue lysine 272.

This sequence belongs to the AdoMet synthase family. As to quaternary structure, homotetramer; dimer of dimers. Mg(2+) serves as cofactor. Requires K(+) as cofactor.

It is found in the cytoplasm. It catalyses the reaction L-methionine + ATP + H2O = S-adenosyl-L-methionine + phosphate + diphosphate. It participates in amino-acid biosynthesis; S-adenosyl-L-methionine biosynthesis; S-adenosyl-L-methionine from L-methionine: step 1/1. Its function is as follows. Catalyzes the formation of S-adenosylmethionine (AdoMet) from methionine and ATP. The overall synthetic reaction is composed of two sequential steps, AdoMet formation and the subsequent tripolyphosphate hydrolysis which occurs prior to release of AdoMet from the enzyme. The sequence is that of S-adenosylmethionine synthase from Paracoccus denitrificans (strain Pd 1222).